The primary structure comprises 447 residues: uncharacterized protein (447 aa).

A disordered region spans residues 39-76; it reads PQAAPYTRNNGMGECRRGHRQGHRAEVHDNRPADKVGQ. Over residues 61–72 the composition is skewed to basic and acidic residues; the sequence is HRAEVHDNRPAD.

Belongs to the 3-oxoacid CoA-transferase subunit A family.

This is an uncharacterized protein from Archaeoglobus fulgidus (strain ATCC 49558 / DSM 4304 / JCM 9628 / NBRC 100126 / VC-16).